The following is a 260-amino-acid chain: Trialysin (260 aa).

Positions 1-19 (MSKFWLLLLLVAAFQFAHS) are cleaved as a signal peptide. A propeptide spans 20 to 55 (YPAAEYELDETTNDEVRQFIGDGYFEDEGDDGDEER) (removed in mature form, probably by the serine protease triapsin).

Belongs to the redulysin-like family. Expressed in salivary glands.

The protein resides in the secreted. It localises to the target cell membrane. Functionally, pore-forming protein that induces lysis of T.cruzi trypomastigotes, bacteria E.coli and human red blood cells. The parasite lysis is much more important than the hemolysis, probably due to difference in membrane composition. Its action on protozoan parasites and bacteria may indicate a role in the control of microorganism growth in the salivary glands. The protein is Trialysin of Triatoma infestans (Assassin bug).